The chain runs to 290 residues: Endoplasmic reticulum-Golgi intermediate compartment protein 1 (290 aa).

Over 1 to 27 (MSFDVRRFDIYRKVPKDLTQPTYTGAF) the chain is Cytoplasmic. The chain crosses the membrane as a helical span at residues 28-48 (ISICCCVFMLFLFLSELTGFI). At 49–254 (ATEIVNELYV…RRRPFYRFIT (206 aa)) the chain is on the lumenal side. N74 is a glycosylation site (N-linked (GlcNAc...) asparagine). The chain crosses the membrane as a helical span at residues 255 to 275 (TICAIIGGTFTVAGIIDSCIF). At 276 to 290 (TASEAWKKIQIGKMS) the chain is on the cytoplasmic side.

This sequence belongs to the ERGIC family.

Its subcellular location is the endoplasmic reticulum membrane. It localises to the endoplasmic reticulum-Golgi intermediate compartment membrane. It is found in the golgi apparatus membrane. In terms of biological role, possible role in transport between endoplasmic reticulum and Golgi. The polypeptide is Endoplasmic reticulum-Golgi intermediate compartment protein 1 (ergic1) (Danio rerio (Zebrafish)).